The primary structure comprises 185 residues: Elongation factor P (185 aa).

It belongs to the elongation factor P family.

It is found in the cytoplasm. It participates in protein biosynthesis; polypeptide chain elongation. Involved in peptide bond synthesis. Stimulates efficient translation and peptide-bond synthesis on native or reconstituted 70S ribosomes in vitro. Probably functions indirectly by altering the affinity of the ribosome for aminoacyl-tRNA, thus increasing their reactivity as acceptors for peptidyl transferase. The sequence is that of Elongation factor P from Thermoanaerobacter sp. (strain X514).